The following is a 564-amino-acid chain: Arginine--tRNA ligase (564 aa).

The short motif at 136–146 (ANPTGPLHMGN) is the 'HIGH' region element.

Belongs to the class-I aminoacyl-tRNA synthetase family. As to quaternary structure, monomer.

The protein localises to the cytoplasm. The enzyme catalyses tRNA(Arg) + L-arginine + ATP = L-arginyl-tRNA(Arg) + AMP + diphosphate. The protein is Arginine--tRNA ligase of Ruminiclostridium cellulolyticum (strain ATCC 35319 / DSM 5812 / JCM 6584 / H10) (Clostridium cellulolyticum).